Reading from the N-terminus, the 401-residue chain is NADH-ubiquinone oxidoreductase 49 kDa subunit (401 aa).

This sequence belongs to the complex I 49 kDa subunit family.

It localises to the mitochondrion. The enzyme catalyses a ubiquinone + NADH + 5 H(+)(in) = a ubiquinol + NAD(+) + 4 H(+)(out). Core subunit of the mitochondrial membrane respiratory chain NADH dehydrogenase (Complex I) that is believed to belong to the minimal assembly required for catalysis. Complex I functions in the transfer of electrons from NADH to the respiratory chain. The immediate electron acceptor for the enzyme is believed to be ubiquinone. Component of the iron-sulfur (IP) fragment of the enzyme. The chain is NADH-ubiquinone oxidoreductase 49 kDa subunit (NAD7) from Acanthamoeba castellanii (Amoeba).